A 159-amino-acid chain; its full sequence is Cathelicidin-5 (159 aa).

An N-terminal signal peptide occupies residues M1 to A29. Residue Q30 is modified to Pyrrolidone carboxylic acid. Positions Q30 to V131 are excised as a propeptide. Disulfide bonds link C86/C97 and C108/C125.

It belongs to the cathelicidin family.

It localises to the secreted. Exerts a potent antimicrobial activity against Gram-negative and Gram-positive bacteria, including methicillin-resistant Staphylococcus aureus, and fungi. This is Cathelicidin-5 (CATHL5) from Bos taurus (Bovine).